Here is a 711-residue protein sequence, read N- to C-terminus: Polyribonucleotide nucleotidyltransferase (711 aa).

Mg(2+) contacts are provided by Asp487 and Asp493. A KH domain is found at 554–613; sequence PRIHTMKISAEKIKDVIGKGGAVIRALTEETGTTIEIEDDGTIKIAATEGAAAKEAIRRI. The S1 motif domain maps to 623 to 691; sequence GRIYTGKVAR…RQGRVRLSMK (69 aa). Residues 691–711 form a disordered region; that stretch reads KEAVEKPAEEAAAEAPAAKEE.

Belongs to the polyribonucleotide nucleotidyltransferase family. In terms of assembly, component of the RNA degradosome, which is a multiprotein complex involved in RNA processing and mRNA degradation. Requires Mg(2+) as cofactor.

It is found in the cytoplasm. The catalysed reaction is RNA(n+1) + phosphate = RNA(n) + a ribonucleoside 5'-diphosphate. Functionally, involved in mRNA degradation. Catalyzes the phosphorolysis of single-stranded polyribonucleotides processively in the 3'- to 5'-direction. The protein is Polyribonucleotide nucleotidyltransferase of Vibrio parahaemolyticus serotype O3:K6 (strain RIMD 2210633).